The following is a 402-amino-acid chain: Alanine racemase (402 aa).

Lys-34 (proton acceptor; specific for D-alanine) is an active-site residue. At Lys-34 the chain carries N6-(pyridoxal phosphate)lysine. Position 133 (Arg-133) interacts with substrate. Residues 226–271 form the RPE1 insert domain; that stretch reads EVSYNLSYKEKFERNTPALATTVCINKCADVNTRLTYKVPLKGSYR. Catalysis depends on Tyr-296, which acts as the Proton acceptor; specific for L-alanine. Met-344 provides a ligand contact to substrate.

The protein belongs to the alanine racemase family. It depends on pyridoxal 5'-phosphate as a cofactor.

The catalysed reaction is L-alanine = D-alanine. Its pathway is amino-acid biosynthesis; D-alanine biosynthesis; D-alanine from L-alanine: step 1/1. Its function is as follows. Catalyzes the interconversion of L-alanine and D-alanine. May also act on other amino acids. The protein is Alanine racemase (alr) of Rickettsia typhi (strain ATCC VR-144 / Wilmington).